The chain runs to 286 residues: 4-hydroxybenzoate octaprenyltransferase (286 aa).

A run of 8 helical transmembrane segments spans residues 20-40, 43-63, 95-115, 116-136, 142-162, 167-187, 210-230, and 235-255; these read IGTFLLLWPCLMALVLAAGGM, LKVLIIFVIGVVVMRACGCII, ILFVVMGLLAFGLVLMLNPLV, VQLSFVGIILTIIYPFTKRFT, FLGVVWSWSIPMAYAAQLGTV, WWLFAANWCWTVAYDTMYAMV, QIIGLFQLAALGCFIMAGLSA, and VFALGILTFIGFGLYQQKLIF.

This sequence belongs to the UbiA prenyltransferase family. Requires Mg(2+) as cofactor.

Its subcellular location is the cell inner membrane. The catalysed reaction is all-trans-octaprenyl diphosphate + 4-hydroxybenzoate = 4-hydroxy-3-(all-trans-octaprenyl)benzoate + diphosphate. It participates in cofactor biosynthesis; ubiquinone biosynthesis. Catalyzes the prenylation of para-hydroxybenzoate (PHB) with an all-trans polyprenyl group. Mediates the second step in the final reaction sequence of ubiquinone-8 (UQ-8) biosynthesis, which is the condensation of the polyisoprenoid side chain with PHB, generating the first membrane-bound Q intermediate 3-octaprenyl-4-hydroxybenzoate. This chain is 4-hydroxybenzoate octaprenyltransferase, found in Shewanella loihica (strain ATCC BAA-1088 / PV-4).